We begin with the raw amino-acid sequence, 167 residues long: Acetolactate synthase small subunit (167 aa).

Residues 7–81 form the ACT domain; that stretch reads TLSVLVEAKP…NVIKIVELED (75 aa).

This sequence belongs to the acetolactate synthase small subunit family. Dimer of large and small chains.

It carries out the reaction 2 pyruvate + H(+) = (2S)-2-acetolactate + CO2. Its pathway is amino-acid biosynthesis; L-isoleucine biosynthesis; L-isoleucine from 2-oxobutanoate: step 1/4. The protein operates within amino-acid biosynthesis; L-valine biosynthesis; L-valine from pyruvate: step 1/4. This is Acetolactate synthase small subunit (ilvH) from Mycobacterium avium.